The chain runs to 273 residues: Ribosomal RNA small subunit methyltransferase A (273 aa).

S-adenosyl-L-methionine contacts are provided by N18, L20, G45, E66, D91, and N113.

The protein belongs to the class I-like SAM-binding methyltransferase superfamily. rRNA adenine N(6)-methyltransferase family. RsmA subfamily.

Its subcellular location is the cytoplasm. It carries out the reaction adenosine(1518)/adenosine(1519) in 16S rRNA + 4 S-adenosyl-L-methionine = N(6)-dimethyladenosine(1518)/N(6)-dimethyladenosine(1519) in 16S rRNA + 4 S-adenosyl-L-homocysteine + 4 H(+). Specifically dimethylates two adjacent adenosines (A1518 and A1519) in the loop of a conserved hairpin near the 3'-end of 16S rRNA in the 30S particle. May play a critical role in biogenesis of 30S subunits. The sequence is that of Ribosomal RNA small subunit methyltransferase A from Escherichia fergusonii (strain ATCC 35469 / DSM 13698 / CCUG 18766 / IAM 14443 / JCM 21226 / LMG 7866 / NBRC 102419 / NCTC 12128 / CDC 0568-73).